The primary structure comprises 186 residues: UPF0301 protein APL_0232 (186 aa).

This sequence belongs to the UPF0301 (AlgH) family.

The polypeptide is UPF0301 protein APL_0232 (Actinobacillus pleuropneumoniae serotype 5b (strain L20)).